A 265-amino-acid chain; its full sequence is uncharacterized protein (265 aa).

Positions 122-145 (THYRDNGQTPPRDTRPHGGISLGG) are disordered.

This is an uncharacterized protein from Zymomonas mobilis subsp. mobilis (strain ATCC 31821 / ZM4 / CP4).